The primary structure comprises 82 residues: Small ribosomal subunit protein uS17 (82 aa).

This sequence belongs to the universal ribosomal protein uS17 family. In terms of assembly, part of the 30S ribosomal subunit.

Its function is as follows. One of the primary rRNA binding proteins, it binds specifically to the 5'-end of 16S ribosomal RNA. This is Small ribosomal subunit protein uS17 from Tolumonas auensis (strain DSM 9187 / NBRC 110442 / TA 4).